The chain runs to 914 residues: Valine--tRNA ligase (914 aa).

The short motif at 45-55 (PNVTGSLHMGH) is the 'HIGH' region element. Positions 538-542 (KMSKS) match the 'KMSKS' region motif. Lys541 is an ATP binding site. A coiled-coil region spans residues 847–914 (LVDLDALKGR…LARKRLADLS (68 aa)).

This sequence belongs to the class-I aminoacyl-tRNA synthetase family. ValS type 1 subfamily. Monomer.

It is found in the cytoplasm. It carries out the reaction tRNA(Val) + L-valine + ATP = L-valyl-tRNA(Val) + AMP + diphosphate. In terms of biological role, catalyzes the attachment of valine to tRNA(Val). As ValRS can inadvertently accommodate and process structurally similar amino acids such as threonine, to avoid such errors, it has a 'posttransfer' editing activity that hydrolyzes mischarged Thr-tRNA(Val) in a tRNA-dependent manner. The polypeptide is Valine--tRNA ligase (Parasynechococcus marenigrum (strain WH8102)).